The following is a 381-amino-acid chain: Phenylalanine dehydrogenase (381 aa).

R55 contributes to the NAD(+) binding site. Position 79 (K79) interacts with L-phenylalanine. Residue K91 is part of the active site. NAD(+) contacts are provided by residues D126, S157, T161, 191–197 (GLGKVGY), 214–215 (DI), 254–255 (AM), and 275–277 (SAN). Position 277 (N277) interacts with L-phenylalanine.

The protein belongs to the Glu/Leu/Phe/Val dehydrogenases family.

The enzyme catalyses L-phenylalanine + NAD(+) + H2O = 3-phenylpyruvate + NH4(+) + NADH + H(+). It participates in amino-acid biosynthesis; L-phenylalanine biosynthesis; L-phenylalanine from phenylpyruvate (PDH route): step 1/1. Its function is as follows. Catalyzes the reversible NAD(+)-dependent oxidative deamination of L-phenylalanine to phenylpyruvate. The polypeptide is Phenylalanine dehydrogenase (Lysinibacillus sphaericus (Bacillus sphaericus)).